The primary structure comprises 203 residues: N-(5'-phosphoribosyl)anthranilate isomerase (203 aa).

It belongs to the TrpF family.

It catalyses the reaction N-(5-phospho-beta-D-ribosyl)anthranilate = 1-(2-carboxyphenylamino)-1-deoxy-D-ribulose 5-phosphate. It participates in amino-acid biosynthesis; L-tryptophan biosynthesis; L-tryptophan from chorismate: step 3/5. In Caldanaerobacter subterraneus subsp. tengcongensis (strain DSM 15242 / JCM 11007 / NBRC 100824 / MB4) (Thermoanaerobacter tengcongensis), this protein is N-(5'-phosphoribosyl)anthranilate isomerase.